Consider the following 217-residue polypeptide: Small ribosomal subunit protein uS3 (217 aa).

Residues 38–106 form the KH type-2 domain; sequence IRNFIKKELA…QVHINIIEIK (69 aa).

Belongs to the universal ribosomal protein uS3 family. In terms of assembly, part of the 30S ribosomal subunit. Forms a tight complex with proteins S10 and S14.

In terms of biological role, binds the lower part of the 30S subunit head. Binds mRNA in the 70S ribosome, positioning it for translation. This is Small ribosomal subunit protein uS3 from Streptococcus suis (strain 98HAH33).